Reading from the N-terminus, the 380-residue chain is Cytochrome b (380 aa).

Transmembrane regions (helical) follow at residues 34 to 54, 78 to 99, 114 to 134, and 179 to 199; these read FGSL…LLAT, WLIR…YLHI, WNTG…GYVL, and FFAL…IHLT. 2 residues coordinate heme b: histidine 84 and histidine 98. Residues histidine 183 and histidine 197 each coordinate heme b. Histidine 202 is a binding site for a ubiquinone. 4 consecutive transmembrane segments (helical) span residues 227-247, 289-309, 321-341, and 348-368; these read LKDI…ALFS, LGGV…PLLH, LSQL…WVGS, and FIII…ILFP.

This sequence belongs to the cytochrome b family. As to quaternary structure, the cytochrome bc1 complex contains 11 subunits: 3 respiratory subunits (MT-CYB, CYC1 and UQCRFS1), 2 core proteins (UQCRC1 and UQCRC2) and 6 low-molecular weight proteins (UQCRH/QCR6, UQCRB/QCR7, UQCRQ/QCR8, UQCR10/QCR9, UQCR11/QCR10 and a cleavage product of UQCRFS1). This cytochrome bc1 complex then forms a dimer. Requires heme b as cofactor.

It localises to the mitochondrion inner membrane. Component of the ubiquinol-cytochrome c reductase complex (complex III or cytochrome b-c1 complex) that is part of the mitochondrial respiratory chain. The b-c1 complex mediates electron transfer from ubiquinol to cytochrome c. Contributes to the generation of a proton gradient across the mitochondrial membrane that is then used for ATP synthesis. The protein is Cytochrome b (MT-CYB) of Ciconia ciconia (White stork).